We begin with the raw amino-acid sequence, 255 residues long: Triosephosphate isomerase (255 aa).

9 to 11 (NWK) provides a ligand contact to substrate. The Electrophile role is filled by histidine 95. Residue glutamate 167 is the Proton acceptor of the active site. Substrate contacts are provided by residues glycine 173, serine 212, and 233–234 (GG).

The protein belongs to the triosephosphate isomerase family. Homodimer.

It localises to the cytoplasm. The catalysed reaction is D-glyceraldehyde 3-phosphate = dihydroxyacetone phosphate. It functions in the pathway carbohydrate biosynthesis; gluconeogenesis. It participates in carbohydrate degradation; glycolysis; D-glyceraldehyde 3-phosphate from glycerone phosphate: step 1/1. Its function is as follows. Involved in the gluconeogenesis. Catalyzes stereospecifically the conversion of dihydroxyacetone phosphate (DHAP) to D-glyceraldehyde-3-phosphate (G3P). This Escherichia fergusonii (strain ATCC 35469 / DSM 13698 / CCUG 18766 / IAM 14443 / JCM 21226 / LMG 7866 / NBRC 102419 / NCTC 12128 / CDC 0568-73) protein is Triosephosphate isomerase.